Here is a 313-residue protein sequence, read N- to C-terminus: MKTLLLLIPLVLTACGTLTGIPAHGGGKRFAVEQELVAASSRAAVKEMDLSALKGRKAALYVSVMGDQGSGNISGGRYSIDALIRGGYHNNPESATQYSYPAYDTTATTKADALSSVTTSTSLLNAPAAALTKNSGRKGERSAGLSVNGTGDYRNETLLANPRDVSFLTNLIQTVFYLRGIEVVPPEYADTDVFVTVDVFGIVRSRTELHLYNAETLKAQTKLEYFAVDRDSRKLLIAPKTAAYESQYQEQYALWMGPYSVGKTVKASDRLMVDFSDITPYGDTTAQNRPDFKQNNGKNPDVGNEVIRRRKGG.

The first 14 residues, methionine 1–alanine 14, serve as a signal peptide directing secretion. Cysteine 15 is lipidated: N-palmitoyl cysteine. Cysteine 15 carries S-diacylglycerol cysteine lipidation. The segment covering glycine 282 to lysine 298 has biased composition (polar residues). The interval glycine 282–glycine 313 is disordered.

The protein belongs to the MafA family.

Its subcellular location is the cell outer membrane. The protein is Adhesin MafA 1/2 (mafA1) of Neisseria meningitidis serogroup C (strain 053442).